A 333-amino-acid chain; its full sequence is Flap endonuclease 1 (333 aa).

An N-domain region spans residues 1–99 (MGVAIRDILA…ETINERREHR (99 aa)). The Mg(2+) site is built by Asp28, Asp81, Glu153, Glu155, Asp174, Asp176, and Asp235. The tract at residues 117–255 (EAYKQASASA…KTALKIVRNG (139 aa)) is I-domain. Positions 325–333 (TQKTLDAWF) are interaction with PCNA.

It belongs to the XPG/RAD2 endonuclease family. FEN1 subfamily. Interacts with PCNA. PCNA stimulates the nuclease activity without altering cleavage specificity. The cofactor is Mg(2+).

Functionally, structure-specific nuclease with 5'-flap endonuclease and 5'-3' exonuclease activities involved in DNA replication and repair. During DNA replication, cleaves the 5'-overhanging flap structure that is generated by displacement synthesis when DNA polymerase encounters the 5'-end of a downstream Okazaki fragment. Binds the unpaired 3'-DNA end and kinks the DNA to facilitate 5' cleavage specificity. Cleaves one nucleotide into the double-stranded DNA from the junction in flap DNA, leaving a nick for ligation. Also involved in the base excision repair (BER) pathway. Acts as a genome stabilization factor that prevents flaps from equilibrating into structures that lead to duplications and deletions. Also possesses 5'-3' exonuclease activity on nicked or gapped double-stranded DNA. The chain is Flap endonuclease 1 from Methanoculleus marisnigri (strain ATCC 35101 / DSM 1498 / JR1).